The sequence spans 307 residues: NAD kinase 1 (307 aa).

Residue D67 is the Proton acceptor of the active site. NAD(+) contacts are provided by residues 67-68 (DG), 149-150 (ND), R179, and D181.

It belongs to the NAD kinase family. Requires a divalent metal cation as cofactor.

It localises to the cytoplasm. It carries out the reaction NAD(+) + ATP = ADP + NADP(+) + H(+). In terms of biological role, involved in the regulation of the intracellular balance of NAD and NADP, and is a key enzyme in the biosynthesis of NADP. Catalyzes specifically the phosphorylation on 2'-hydroxyl of the adenosine moiety of NAD to yield NADP. The sequence is that of NAD kinase 1 from Prochlorococcus marinus (strain SARG / CCMP1375 / SS120).